A 235-amino-acid polypeptide reads, in one-letter code: Type II secretion system protein N (235 aa).

The Cytoplasmic segment spans residues M1–A34. A helical; Signal-anchor for type II membrane protein membrane pass occupies residues L35–W55. Residues L56–D235 are Periplasmic-facing. The disordered stretch occupies residues D205–D235. Residues E226–D235 show a composition bias toward low complexity.

It is found in the cell inner membrane. In terms of biological role, involved in a type II secretion system (T2SS, formerly general secretion pathway, GSP) for the export of proteins. Required for the translocation of a variety of enzymes across the outer membrane. This Pseudomonas aeruginosa (strain ATCC 15692 / DSM 22644 / CIP 104116 / JCM 14847 / LMG 12228 / 1C / PRS 101 / PAO1) protein is Type II secretion system protein N (xcpP).